We begin with the raw amino-acid sequence, 164 residues long: FMN reductase (NADH) RutF (164 aa).

The protein belongs to the non-flavoprotein flavin reductase family. RutF subfamily.

It carries out the reaction FMNH2 + NAD(+) = FMN + NADH + 2 H(+). In terms of biological role, catalyzes the reduction of FMN to FMNH2 which is used to reduce pyrimidine by RutA via the Rut pathway. This is FMN reductase (NADH) RutF from Escherichia coli O150:H5 (strain SE15).